Consider the following 361-residue polypeptide: Protein RecA (361 aa).

77-84 is a binding site for ATP; it reads GPESSGKT.

Belongs to the RecA family.

Its subcellular location is the cytoplasm. Can catalyze the hydrolysis of ATP in the presence of single-stranded DNA, the ATP-dependent uptake of single-stranded DNA by duplex DNA, and the ATP-dependent hybridization of homologous single-stranded DNAs. It interacts with LexA causing its activation and leading to its autocatalytic cleavage. In Brucella anthropi (strain ATCC 49188 / DSM 6882 / CCUG 24695 / JCM 21032 / LMG 3331 / NBRC 15819 / NCTC 12168 / Alc 37) (Ochrobactrum anthropi), this protein is Protein RecA.